We begin with the raw amino-acid sequence, 194 residues long: Adenylate kinase (194 aa).

11–16 provides a ligand contact to ATP; sequence GSGKGT. The segment at 31-60 is NMP; the sequence is STGELLRAEIKAQTELGQAAAGYINEGHLV. AMP contacts are provided by residues threonine 32, arginine 37, 58-60, 86-89, and glutamine 93; these read HLV and GFPR. The segment at 127–137 is LID; it reads NRGKVSGRSDD. Arginine 128 contacts ATP. Residues arginine 134 and arginine 145 each contribute to the AMP site. Residue glycine 173 coordinates ATP.

The protein belongs to the adenylate kinase family. Monomer.

It is found in the cytoplasm. It carries out the reaction AMP + ATP = 2 ADP. It functions in the pathway purine metabolism; AMP biosynthesis via salvage pathway; AMP from ADP: step 1/1. Its function is as follows. Catalyzes the reversible transfer of the terminal phosphate group between ATP and AMP. Plays an important role in cellular energy homeostasis and in adenine nucleotide metabolism. In Porphyromonas gingivalis (strain ATCC BAA-308 / W83), this protein is Adenylate kinase.